A 376-amino-acid chain; its full sequence is Partitioning defective 6 homolog gamma (376 aa).

Residues 18 to 98 (AVEVKSKFGA…PLLRVFIQKR (81 aa)) enclose the PB1 domain. Residues 127–254 (RRRAHLDIGL…VTVKPANQRN (128 aa)) form an interaction with PARD3 and CDC42 region. The region spanning 134–151 (IGLPRDFRPVSSIIDVDL) is the Pseudo-CRIB domain. The region spanning 158–251 (RVRLHRHGCE…NLIVTVKPAN (94 aa)) is the PDZ domain. The interval 356–376 (PRHSLALPPGGVEEHGPAVTL) is disordered. Positions 367–376 (VEEHGPAVTL) are enriched in basic and acidic residues.

This sequence belongs to the PAR6 family. Interacts with PARD3. Interacts with GTP-bound forms of CDC42, RHOQ/TC10 and RAC1. Interacts with the N-terminal part of PRKCI and PRKCZ. As to expression, widely expressed, with a higher expression in fetal and adult kidney.

It is found in the cytoplasm. The protein resides in the cell membrane. It localises to the cell junction. Its subcellular location is the tight junction. Adapter protein involved in asymmetrical cell division and cell polarization processes. May play a role in the formation of epithelial tight junctions. The PARD6-PARD3 complex links GTP-bound Rho small GTPases to atypical protein kinase C proteins. This chain is Partitioning defective 6 homolog gamma (PARD6G), found in Homo sapiens (Human).